The following is a 375-amino-acid chain: Outer membrane porin C (375 aa).

Positions 1–21 (MKVKVLSLLVPALLVAGAANA) are cleaved as a signal peptide. The Periplasmic portion of the chain corresponds to 22 to 33 (AEVYNKDGNKLD). The chain crosses the membrane as a beta stranded span at residues 34–42 (LYGKVDGLH). Over 43–53 (YFSDDKSVDGD) the chain is Extracellular. A beta stranded transmembrane segment spans residues 54–63 (QTYMRLGFKG). At 64–73 (ETQVTDQLTG) the chain is on the periplasmic side. The beta stranded transmembrane segment at 74–84 (YGQWEYQIQGN) threads the bilayer. Over 85–91 (APESENN) the chain is Extracellular. The beta stranded transmembrane segment at 92–101 (SWTRVAFAGL) threads the bilayer. Residues 102-106 (KFQDI) lie on the Periplasmic side of the membrane. A beta stranded transmembrane segment spans residues 107–115 (GSFDYGRNY). Over 116 to 141 (GVVYDVTSWTDVLPEFGGDTYGSDNF) the chain is Extracellular. Residues 142 to 154 (MQQRGNGFATYRN) form a beta stranded membrane-spanning segment. The Periplasmic portion of the chain corresponds to 155–163 (TDFFGLVDG). Residues 164–171 (LNFAVQYQ) form a beta stranded membrane-spanning segment. At 172-204 (GQNGSVSGENDPDFTGHGITNNGRKALRQNGDG) the chain is on the extracellular side. A beta stranded membrane pass occupies residues 205–211 (VGGSITY). The Periplasmic portion of the chain corresponds to 212–215 (DYEG). A beta stranded membrane pass occupies residues 216–223 (FGVGAAVS). Residues 224-245 (SSKRTDAQNTAAYIGNGDRAET) lie on the Extracellular side of the membrane. The beta stranded transmembrane segment at 246–252 (YTGGLKY) threads the bilayer. Topologically, residues 253–256 (DANN) are periplasmic. Residues 257–264 (IYLAAQYT) traverse the membrane as a beta stranded segment. Topologically, residues 265–273 (QTYNATRVG) are extracellular. The chain crosses the membrane as a beta stranded span at residues 274 to 290 (SLGWANKAQNFEAVAQY). The Periplasmic segment spans residues 291–295 (QFDFG). A beta stranded membrane pass occupies residues 296 to 303 (LRPSVAYL). Over 304–326 (QSKGKNLGTIGTRNYDDEDILKY) the chain is Extracellular. Residues 327-334 (VDVGATYY) form a beta stranded membrane-spanning segment. The Periplasmic portion of the chain corresponds to 335–338 (FNKN). Residues 339 to 346 (MSTYVDYK) form a beta stranded membrane-spanning segment. The Extracellular segment spans residues 347 to 366 (INLLDDNQFTRDAGINTDNI). A beta stranded membrane pass occupies residues 367–374 (VALGLVYQ). F375 is a topological domain (periplasmic).

It belongs to the Gram-negative porin family. In terms of assembly, homotrimer. Forms mixed heterotrimers with OmpF; other mixed heterotrimers are also probable.

Its subcellular location is the cell outer membrane. Functionally, forms pores that allow passive diffusion of small molecules across the outer membrane. In terms of biological role, (Microbial infection) Supports colicin E5 entry in the absence of its major receptor OmpF. Its function is as follows. (Microbial infection) A mixed OmpC-OmpF heterotrimer is the outer membrane receptor for toxin CdiA-EC536. The protein is Outer membrane porin C (ompC) of Escherichia coli O6:K15:H31 (strain 536 / UPEC).